Here is a 20-residue protein sequence, read N- to C-terminus: XSNSGDLVDAVVPYMGESIS.

It belongs to the 2-oxoacid dehydrogenase family. As to quaternary structure, forms a 24-polypeptide structural core with octahedral symmetry. It depends on (R)-lipoate as a cofactor.

Its subcellular location is the mitochondrion membrane. The catalysed reaction is N(6)-[(R)-dihydrolipoyl]-L-lysyl-[protein] + succinyl-CoA = N(6)-[(R)-S(8)-succinyldihydrolipoyl]-L-lysyl-[protein] + CoA. It functions in the pathway amino-acid degradation; L-lysine degradation via saccharopine pathway; glutaryl-CoA from L-lysine: step 6/6. Functionally, the 2-oxoglutarate dehydrogenase complex catalyzes the overall conversion of 2-oxoglutarate to succinyl-CoA and CO(2). It contains multiple copies of three enzymatic components: 2-oxoglutarate dehydrogenase (E1), dihydrolipoamide succinyltransferase (E2) and lipoamide dehydrogenase (E3). This Solanum tuberosum (Potato) protein is Dihydrolipoamide-residue succinyltransferase component of 2-oxoglutarate dehydrogenase complex.